The primary structure comprises 81 residues: Protein K6 (81 aa).

This sequence belongs to the poxviridae K6 protein family.

This chain is Protein K6, found in Homo sapiens (Human).